A 728-amino-acid chain; its full sequence is MLYQSETIQVSWLKDGIAELVFNAPAAINKLDTKTVASLDKAIASLEQQTGLKGVLLRSEKTAFIVGADITEFLSLFDSPVEKLQEWLNFSNSIFNRIEDLPVPTISAINGYALGGGCECVLSTDFRVASPDIRIGLPETKLGIMPGFGGSVRLPRLIGTDNALDIIAAGKDIGAEEALKNGLIDAVVPKEKLVDSAVSMLEQAIAGNLDWKAARQPKLEPLKLNETERGMSFSVAKGMVMKVAGPHYPAPITAVKSIEKAATFGRDEALKQETASFIPLAQTNVARALVGIFLNDQYVKGLAKKHLKEVTIPEYAAVLGAGIMGGGIAYQSARKGIPVMMKDISQQSLELGMNEAAKLLNKQFERGRLDAIKMARTLSSIQPTLNYAGIEQAQIVVEAVVENPKIKAAVLSETETLVNEDCVLASNTSTIPISELAKSLKRPENFCGMHFFNPVHRMPLVEVIRGEKTSEKTISTVVAYASKMGKTPIVVNDCPGFFVNRVLLPYLLGFGLLLRDGGDFRQIDKIMEKEFGWPMGPAYLIDVIGLDTAHHSQSVMAQGFPDRMHRDYKDAIHVLYDNQRYGQKNGLGFYKYTQDKKGKPKKEQDEQTDQLLATICQQKSNFSGEEIIARTMIPMINEVVRCLEEGVIASPAEADMALVYGLGFPPFHGGVFRYLETMGTAAYVKMAENYAHLGALYQVPPGLKAKAERNESYYSTAATIAVSTGKTA.

The enoyl-CoA hydratase/isomerase stretch occupies residues 1-189; that stretch reads MLYQSETIQV…KNGLIDAVVP (189 aa). Asp-296 lines the substrate pocket. The 3-hydroxyacyl-CoA dehydrogenase stretch occupies residues 311–728; the sequence is TIPEYAAVLG…TIAVSTGKTA (418 aa). NAD(+) contacts are provided by residues Met-324, Asp-343, 400-402, Lys-407, and Ser-429; that span reads VVE. His-450 (for 3-hydroxyacyl-CoA dehydrogenase activity) is an active-site residue. Residue Asn-453 participates in NAD(+) binding. The substrate site is built by Asn-500 and Tyr-660.

In the N-terminal section; belongs to the enoyl-CoA hydratase/isomerase family. It in the C-terminal section; belongs to the 3-hydroxyacyl-CoA dehydrogenase family. As to quaternary structure, heterotetramer of two alpha chains (FadB) and two beta chains (FadA).

It catalyses the reaction a (3S)-3-hydroxyacyl-CoA + NAD(+) = a 3-oxoacyl-CoA + NADH + H(+). The enzyme catalyses a (3S)-3-hydroxyacyl-CoA = a (2E)-enoyl-CoA + H2O. It carries out the reaction a 4-saturated-(3S)-3-hydroxyacyl-CoA = a (3E)-enoyl-CoA + H2O. The catalysed reaction is (3S)-3-hydroxybutanoyl-CoA = (3R)-3-hydroxybutanoyl-CoA. It catalyses the reaction a (3Z)-enoyl-CoA = a 4-saturated (2E)-enoyl-CoA. The enzyme catalyses a (3E)-enoyl-CoA = a 4-saturated (2E)-enoyl-CoA. Its pathway is lipid metabolism; fatty acid beta-oxidation. Involved in the aerobic and anaerobic degradation of long-chain fatty acids via beta-oxidation cycle. Catalyzes the formation of 3-oxoacyl-CoA from enoyl-CoA via L-3-hydroxyacyl-CoA. It can also use D-3-hydroxyacyl-CoA and cis-3-enoyl-CoA as substrate. The chain is Fatty acid oxidation complex subunit alpha from Photorhabdus laumondii subsp. laumondii (strain DSM 15139 / CIP 105565 / TT01) (Photorhabdus luminescens subsp. laumondii).